Reading from the N-terminus, the 1848-residue chain is Histone-lysine N-methyltransferase, H3 lysine-79 specific (1848 aa).

The DOT1 domain maps to 19-336 (DVISFAWPLQ…ILERYFQRLK (318 aa)). Residues 142 to 145 (YGET), 165 to 174 (FIDLGSGVGQ), Glu192, and 228 to 229 (DF) each bind S-adenosyl-L-methionine. Disordered stretches follow at residues 338 to 537 (KGGN…TRKA), 558 to 593 (AVSV…ARGR), 886 to 908 (LNSV…WPEV), 960 to 996 (PPPA…QMTL), 1033 to 1075 (LNED…AQSL), 1165 to 1190 (HMAS…RSSV), 1221 to 1333 (QRQQ…TQVS), 1345 to 1374 (QEKL…KTIG), 1432 to 1463 (VHVR…GGAA), 1486 to 1508 (ARAN…GRDY), 1529 to 1559 (EQQQ…PPLE), 1573 to 1604 (KYKE…LPTH), 1637 to 1713 (SPLA…VDPP), and 1731 to 1757 (QLSH…LQLT). Basic and acidic residues predominate over residues 339–360 (GGNDHESVGTVRTTRDRAKREA). Over residues 364 to 373 (QHHHNNHHSN) the composition is skewed to basic residues. The segment covering 391–405 (ATATAAHQQRHQSQS) has biased composition (low complexity). Residues 419 to 428 (SGQQAASKTR) show a composition bias toward polar residues. 2 stretches are compositionally biased toward low complexity: residues 429-439 (QQLQHQHNQQQ) and 453-474 (DATN…ASNG). A phosphoserine mark is found at Ser491, Ser492, and Ser494. Gly residues predominate over residues 507 to 518 (GSNGGSIGGGSV). Composition is skewed to basic residues over residues 526–535 (TQKKRKKLTR) and 582–593 (RKGRMKKGARGR). The segment covering 1221–1235 (QRQQMRVEEQQQQQQ) has biased composition (low complexity). Over residues 1236-1263 (HQHHHHHHHHHPQHRLPQHVQHQHPHQH) the composition is skewed to basic residues. The segment covering 1289 to 1300 (EPPQTQPLELLP) has biased composition (low complexity). 3 positions are modified to phosphoserine: Ser1318, Ser1324, and Ser1325. Residues 1532–1545 (QKQSKGAGSAGSSS) are compositionally biased toward low complexity. Basic and acidic residues predominate over residues 1574 to 1583 (YKEETEERQR). Low complexity-rich tracts occupy residues 1585–1598 (AAAA…PPAG) and 1681–1696 (HDAT…SSSS). Positions 1697 to 1706 (CGRRSNSNNG) are enriched in polar residues.

Belongs to the class I-like SAM-binding methyltransferase superfamily. DOT1 family. As to expression, broadly expressed in most tissues. Expressed in a large subset of neurons and in a small subset of glial cells.

The protein resides in the nucleus. The catalysed reaction is L-lysyl(79)-[histone H3] + 3 S-adenosyl-L-methionine = N(6),N(6),N(6)-trimethyl-L-lysyl(79)-[histone H3] + 3 S-adenosyl-L-homocysteine + 3 H(+). Functionally, histone methyltransferase. Methylates 'Lys-79' of histone H3. Required for Polycomb Group (PcG) and trithorax Group (trxG) maintenance of expression. Also involved in telomeric silencing but do not in centric heterochromatin. Probably participates in pairing sensitivity. In Drosophila melanogaster (Fruit fly), this protein is Histone-lysine N-methyltransferase, H3 lysine-79 specific (gpp).